Reading from the N-terminus, the 95-residue chain is Large ribosomal subunit protein bL28 (95 aa).

The disordered stretch occupies residues 1 to 22; that stretch reads MSRRCELTGKGPMTGNNVSHAN.

It belongs to the bacterial ribosomal protein bL28 family.

The polypeptide is Large ribosomal subunit protein bL28 (Ruegeria pomeroyi (strain ATCC 700808 / DSM 15171 / DSS-3) (Silicibacter pomeroyi)).